Consider the following 205-residue polypeptide: Large ribosomal subunit protein uL4 (205 aa).

The disordered stretch occupies residues 56–78 (ISGTTAKPYRQKHTGRARQGSLR).

This sequence belongs to the universal ribosomal protein uL4 family. In terms of assembly, part of the 50S ribosomal subunit.

In terms of biological role, one of the primary rRNA binding proteins, this protein initially binds near the 5'-end of the 23S rRNA. It is important during the early stages of 50S assembly. It makes multiple contacts with different domains of the 23S rRNA in the assembled 50S subunit and ribosome. Forms part of the polypeptide exit tunnel. The chain is Large ribosomal subunit protein uL4 from Ehrlichia canis (strain Jake).